We begin with the raw amino-acid sequence, 75 residues long: U6-lycotoxin-Ls1d (75 aa).

An N-terminal signal peptide occupies residues 1 to 21 (MKLLFFTALVLVVISLIEVEA). A propeptide spanning residues 22-25 (ENER) is cleaved from the precursor.

It belongs to the neurotoxin 19 (CSTX) family. 06 (U6-Lctx) subfamily. Post-translationally, contains 4 disulfide bonds. Expressed by the venom gland.

The protein resides in the secreted. The sequence is that of U6-lycotoxin-Ls1d from Lycosa singoriensis (Wolf spider).